The chain runs to 44 residues: Tachystatin-A1 (44 aa).

3 disulfide bridges follow: C4–C24, C11–C29, and C23–C41.

As to expression, granular hemocytes, small secretory granules.

The protein localises to the secreted. Its function is as follows. Exhibits stronger antimicrobial activity against the Gram-positive bacteria (S.aureus (IC(50) is 4.2 ug/ml)) and fungi (C.albicans (IC(50) is 3.0 ug/ml) and P.pastoris (IC(50) is 0.5 ug/ml)) than Gram-negative bacteria (E.coli (IC(50) is 25 ug/ml)). Binds to chitin (8.4 uM are required to obtain 50% of binding). Does not cause hemolysis on sheep erythrocytes. Has no blocking activity on the P-type calcium channel. This Tachypleus tridentatus (Japanese horseshoe crab) protein is Tachystatin-A1.